Consider the following 83-residue polypeptide: Small ribosomal subunit protein bS16 (83 aa).

Belongs to the bacterial ribosomal protein bS16 family.

The protein is Small ribosomal subunit protein bS16 of Ectopseudomonas mendocina (strain ymp) (Pseudomonas mendocina).